Reading from the N-terminus, the 253-residue chain is MLKTRIIPCLDVADGRVVKGVNFVDLRDAGDPVEAARAYDAAGADELCFLDIHATHENRGTMYDLVTRTAEQCFMPLTVGGGVRTHQDVRALLLAGADKVSFNSAAVADPTVVAEAADRFGSQCIVVAIDAKTVAPGRWEIFTHGGRRATGIDAVEFACDVASRGAGEILLTSMDRDGTRAGFNLPLTRAISEAVPIPVIASGGVGTLDHLVEGVTEGGASAVLAASIFHFGEFTIGEAKAHMATAGIPVRLA.

Catalysis depends on residues aspartate 11 and aspartate 130.

It belongs to the HisA/HisF family. As to quaternary structure, heterodimer of HisH and HisF.

The protein resides in the cytoplasm. It catalyses the reaction 5-[(5-phospho-1-deoxy-D-ribulos-1-ylimino)methylamino]-1-(5-phospho-beta-D-ribosyl)imidazole-4-carboxamide + L-glutamine = D-erythro-1-(imidazol-4-yl)glycerol 3-phosphate + 5-amino-1-(5-phospho-beta-D-ribosyl)imidazole-4-carboxamide + L-glutamate + H(+). Its pathway is amino-acid biosynthesis; L-histidine biosynthesis; L-histidine from 5-phospho-alpha-D-ribose 1-diphosphate: step 5/9. In terms of biological role, IGPS catalyzes the conversion of PRFAR and glutamine to IGP, AICAR and glutamate. The HisF subunit catalyzes the cyclization activity that produces IGP and AICAR from PRFAR using the ammonia provided by the HisH subunit. The chain is Imidazole glycerol phosphate synthase subunit HisF from Cereibacter sphaeroides (strain KD131 / KCTC 12085) (Rhodobacter sphaeroides).